We begin with the raw amino-acid sequence, 185 residues long: Large ribosomal subunit protein uL6 (185 aa).

The protein belongs to the universal ribosomal protein uL6 family. As to quaternary structure, part of the 50S ribosomal subunit.

Functionally, this protein binds to the 23S rRNA, and is important in its secondary structure. It is located near the subunit interface in the base of the L7/L12 stalk, and near the tRNA binding site of the peptidyltransferase center. In Deinococcus deserti (strain DSM 17065 / CIP 109153 / LMG 22923 / VCD115), this protein is Large ribosomal subunit protein uL6.